The primary structure comprises 295 residues: GTP cyclohydrolase FolE2 (295 aa).

The protein belongs to the GTP cyclohydrolase IV family.

The enzyme catalyses GTP + H2O = 7,8-dihydroneopterin 3'-triphosphate + formate + H(+). It participates in cofactor biosynthesis; 7,8-dihydroneopterin triphosphate biosynthesis; 7,8-dihydroneopterin triphosphate from GTP: step 1/1. Converts GTP to 7,8-dihydroneopterin triphosphate. In Pseudomonas putida (strain W619), this protein is GTP cyclohydrolase FolE2.